A 295-amino-acid chain; its full sequence is Cop9 signalosome-interactor 1 (295 aa).

Component of a COP9 signalosome-like (CSN) complex, composed of RRI1/CSN5, CSN9, RRI2/CSN10, PCI8/CSN11, CSN12 and CSI1. In the complex, it probably interacts directly with CSN9 and CSN12. Interacts also with RPN5.

The protein resides in the cytoplasm. It is found in the nucleus. Its function is as follows. Component of the COP9 signalosome (CSN) complex that acts as an regulator of the ubiquitin (Ubl) conjugation pathway by mediating the deneddylation of the cullin subunit of SCF-type E3 ubiquitin-protein ligase complexes The CSN complex is involved in the regulation of the mating pheromone response. The chain is Cop9 signalosome-interactor 1 (CSI1) from Saccharomyces cerevisiae (strain ATCC 204508 / S288c) (Baker's yeast).